Reading from the N-terminus, the 61-residue chain is [Thr6]-bradykinyl-Val,Asp (61 aa).

Positions 1–22 are cleaved as a signal peptide; sequence MSFLKKSLFLVLFLGLVSFSIC. A propeptide spanning residues 23–50 is cleaved from the precursor; the sequence is EEEKRETEEEENEDEMDKESEEKRESPE. Positions 24 to 61 are disordered; it reads EEKRETEEEENEDEMDKESEEKRESPERPPGFTPFRVD. The span at 30–41 shows a compositional bias: acidic residues; sequence EEEENEDEMDKE. P53 is subject to 4-hydroxyproline; in form [Hyp3,Thr6]-bradykinyl-Val,Asp and [Hyp3,Thr6]-bradykinin.

Belongs to the frog skin active peptide (FSAP) family. Bradykinin-related peptide subfamily. As to expression, expressed by the skin glands.

Its subcellular location is the secreted. Functionally, induces relaxation of rat smooth muscle from tail artery (EC(50)=16.8 nM) and contraction of that from ileum (EC(50)=205 nM), urinary bladder (EC(50)=895 nM) and uterus (EC(50)=60.3 nM). Binds to both bradykinin receptor B1 (BDKRB1) and B2 (BDKRB2). [Hyp3,Thr6]-bradykinin: Induces relaxation of rat smooth muscle from tail artery (EC(50)=56.7 nM) and contraction of that from ileum (EC(50)=588 nM), urinary bladder (EC(50)=4.6 uM) and uterus (EC(50)=3.9 nM). Binds to both bradykinin receptor B1 (BDKRB1) and B2 (BDKRB2). In arterial smooth muscle, the effect via BDKRB1 is stronger, in uterus, ileum and urinary bladder that via BDKRB2. In terms of biological role, induces relaxation of rat smooth muscle from tail artery (EC(50)=10.8 nM) and contraction of that from ileum (EC(50)=645 nM), urinary bladder (EC(50)=1.1 uM) and uterus (EC(50)=1.2 uM). Binds to both bradykinin receptor B1 (BDKRB1) and B2 (BDKRB2). Apart from uterus smooth muscle, the effect via B2 is stronger. Its function is as follows. [Hyp3,Thr6]-bradykinyl-Val,Asp: Induces relaxation of rat smooth muscle from tail artery (EC(50)=3.5 nM) and contraction of that from ileum (EC(50)=223 nM), urinary bladder (EC(50)=1.5 uM) and uterus (EC(50)=356 nM). Binds to both bradykinin receptor B1 (BDKRB1) and B2 (BDKRB2); the effects via B2 a stronger. This Agalychnis callidryas (Red-eyed tree frog) protein is [Thr6]-bradykinyl-Val,Asp.